The chain runs to 153 residues: 6,7-dimethyl-8-ribityllumazine synthase (153 aa).

Residues Phe-22, 56 to 58 (AFE), and 80 to 82 (AVI) each bind 5-amino-6-(D-ribitylamino)uracil. 85 to 86 (ST) provides a ligand contact to (2S)-2-hydroxy-3-oxobutyl phosphate. The Proton donor role is filled by His-88. Residue Phe-113 coordinates 5-amino-6-(D-ribitylamino)uracil. Arg-127 lines the (2S)-2-hydroxy-3-oxobutyl phosphate pocket.

This sequence belongs to the DMRL synthase family.

It carries out the reaction (2S)-2-hydroxy-3-oxobutyl phosphate + 5-amino-6-(D-ribitylamino)uracil = 6,7-dimethyl-8-(1-D-ribityl)lumazine + phosphate + 2 H2O + H(+). Its pathway is cofactor biosynthesis; riboflavin biosynthesis; riboflavin from 2-hydroxy-3-oxobutyl phosphate and 5-amino-6-(D-ribitylamino)uracil: step 1/2. Its function is as follows. Catalyzes the formation of 6,7-dimethyl-8-ribityllumazine by condensation of 5-amino-6-(D-ribitylamino)uracil with 3,4-dihydroxy-2-butanone 4-phosphate. This is the penultimate step in the biosynthesis of riboflavin. The chain is 6,7-dimethyl-8-ribityllumazine synthase from Clostridium botulinum (strain Alaska E43 / Type E3).